The chain runs to 40 residues: Photosystem II reaction center protein J (40 aa).

Residues 8-28 (IPLWIIGTVAGILVIGLIGIF) traverse the membrane as a helical segment.

It belongs to the PsbJ family. As to quaternary structure, PSII is composed of 1 copy each of membrane proteins PsbA, PsbB, PsbC, PsbD, PsbE, PsbF, PsbH, PsbI, PsbJ, PsbK, PsbL, PsbM, PsbT, PsbX, PsbY, PsbZ, Psb30/Ycf12, at least 3 peripheral proteins of the oxygen-evolving complex and a large number of cofactors. It forms dimeric complexes.

The protein resides in the plastid. Its subcellular location is the chloroplast thylakoid membrane. In terms of biological role, one of the components of the core complex of photosystem II (PSII). PSII is a light-driven water:plastoquinone oxidoreductase that uses light energy to abstract electrons from H(2)O, generating O(2) and a proton gradient subsequently used for ATP formation. It consists of a core antenna complex that captures photons, and an electron transfer chain that converts photonic excitation into a charge separation. In Nicotiana sylvestris (Wood tobacco), this protein is Photosystem II reaction center protein J.